The chain runs to 189 residues: Glucose-6-phosphate isomerase (189 aa).

His-88, His-90, Glu-97, and His-136 together coordinate Fe cation.

Belongs to the archaeal-type GPI family. As to quaternary structure, homodimer. The cofactor is Fe cation.

The protein resides in the cytoplasm. It catalyses the reaction alpha-D-glucose 6-phosphate = beta-D-fructose 6-phosphate. The protein operates within carbohydrate degradation; glycolysis; D-glyceraldehyde 3-phosphate and glycerone phosphate from D-glucose: step 2/4. This Pyrococcus abyssi (strain GE5 / Orsay) protein is Glucose-6-phosphate isomerase (pgiA).